Reading from the N-terminus, the 165-residue chain is Xanthine-guanine phosphoribosyltransferase (165 aa).

5-phospho-alpha-D-ribose 1-diphosphate-binding positions include 41–42 (RG) and 98–106 (DDLTDTGKT). Residue aspartate 99 participates in Mg(2+) binding. Guanine-binding residues include aspartate 102 and isoleucine 145. Residues aspartate 102 and isoleucine 145 each contribute to the xanthine site. Residues 102-106 (DTGKT) and 144-145 (WI) contribute to the GMP site.

This sequence belongs to the purine/pyrimidine phosphoribosyltransferase family. XGPT subfamily. As to quaternary structure, homotetramer. Requires Mg(2+) as cofactor.

It localises to the cell inner membrane. The catalysed reaction is GMP + diphosphate = guanine + 5-phospho-alpha-D-ribose 1-diphosphate. It catalyses the reaction XMP + diphosphate = xanthine + 5-phospho-alpha-D-ribose 1-diphosphate. The enzyme catalyses IMP + diphosphate = hypoxanthine + 5-phospho-alpha-D-ribose 1-diphosphate. It participates in purine metabolism; GMP biosynthesis via salvage pathway; GMP from guanine: step 1/1. It functions in the pathway purine metabolism; XMP biosynthesis via salvage pathway; XMP from xanthine: step 1/1. Its function is as follows. Purine salvage pathway enzyme that catalyzes the transfer of the ribosyl-5-phosphate group from 5-phospho-alpha-D-ribose 1-diphosphate (PRPP) to the N9 position of the 6-oxopurines guanine and xanthine to form the corresponding ribonucleotides GMP (guanosine 5'-monophosphate) and XMP (xanthosine 5'-monophosphate), with the release of PPi. To a lesser extent, also acts on hypoxanthine. The sequence is that of Xanthine-guanine phosphoribosyltransferase from Sinorhizobium medicae (strain WSM419) (Ensifer medicae).